The primary structure comprises 188 residues: Adenine phosphoribosyltransferase (188 aa).

The protein belongs to the purine/pyrimidine phosphoribosyltransferase family. As to quaternary structure, homodimer.

The protein localises to the cytoplasm. The enzyme catalyses AMP + diphosphate = 5-phospho-alpha-D-ribose 1-diphosphate + adenine. It participates in purine metabolism; AMP biosynthesis via salvage pathway; AMP from adenine: step 1/1. In terms of biological role, catalyzes a salvage reaction resulting in the formation of AMP, that is energically less costly than de novo synthesis. The polypeptide is Adenine phosphoribosyltransferase (Salinispora tropica (strain ATCC BAA-916 / DSM 44818 / JCM 13857 / NBRC 105044 / CNB-440)).